Consider the following 89-residue polypeptide: Small ribosomal subunit protein uS15 (89 aa).

It belongs to the universal ribosomal protein uS15 family. As to quaternary structure, part of the 30S ribosomal subunit. Forms a bridge to the 50S subunit in the 70S ribosome, contacting the 23S rRNA.

In terms of biological role, one of the primary rRNA binding proteins, it binds directly to 16S rRNA where it helps nucleate assembly of the platform of the 30S subunit by binding and bridging several RNA helices of the 16S rRNA. Forms an intersubunit bridge (bridge B4) with the 23S rRNA of the 50S subunit in the ribosome. This chain is Small ribosomal subunit protein uS15, found in Chlamydia caviae (strain ATCC VR-813 / DSM 19441 / 03DC25 / GPIC) (Chlamydophila caviae).